The sequence spans 320 residues: 4-hydroxy-3-methylbut-2-enyl diphosphate reductase (320 aa).

Position 12 (Cys-12) interacts with [4Fe-4S] cluster. (2E)-4-hydroxy-3-methylbut-2-enyl diphosphate-binding residues include His-41 and His-74. The dimethylallyl diphosphate site is built by His-41 and His-74. Isopentenyl diphosphate contacts are provided by His-41 and His-74. Residue Cys-96 participates in [4Fe-4S] cluster binding. (2E)-4-hydroxy-3-methylbut-2-enyl diphosphate is bound at residue His-124. His-124 provides a ligand contact to dimethylallyl diphosphate. An isopentenyl diphosphate-binding site is contributed by His-124. Glu-126 serves as the catalytic Proton donor. Thr-167 is a binding site for (2E)-4-hydroxy-3-methylbut-2-enyl diphosphate. Residue Cys-197 participates in [4Fe-4S] cluster binding. Residues Ser-225, Ser-226, Asn-227, and Ser-269 each coordinate (2E)-4-hydroxy-3-methylbut-2-enyl diphosphate. 4 residues coordinate dimethylallyl diphosphate: Ser-225, Ser-226, Asn-227, and Ser-269. Isopentenyl diphosphate is bound by residues Ser-225, Ser-226, Asn-227, and Ser-269.

This sequence belongs to the IspH family. [4Fe-4S] cluster is required as a cofactor.

The enzyme catalyses isopentenyl diphosphate + 2 oxidized [2Fe-2S]-[ferredoxin] + H2O = (2E)-4-hydroxy-3-methylbut-2-enyl diphosphate + 2 reduced [2Fe-2S]-[ferredoxin] + 2 H(+). It carries out the reaction dimethylallyl diphosphate + 2 oxidized [2Fe-2S]-[ferredoxin] + H2O = (2E)-4-hydroxy-3-methylbut-2-enyl diphosphate + 2 reduced [2Fe-2S]-[ferredoxin] + 2 H(+). It participates in isoprenoid biosynthesis; dimethylallyl diphosphate biosynthesis; dimethylallyl diphosphate from (2E)-4-hydroxy-3-methylbutenyl diphosphate: step 1/1. The protein operates within isoprenoid biosynthesis; isopentenyl diphosphate biosynthesis via DXP pathway; isopentenyl diphosphate from 1-deoxy-D-xylulose 5-phosphate: step 6/6. Its function is as follows. Catalyzes the conversion of 1-hydroxy-2-methyl-2-(E)-butenyl 4-diphosphate (HMBPP) into a mixture of isopentenyl diphosphate (IPP) and dimethylallyl diphosphate (DMAPP). Acts in the terminal step of the DOXP/MEP pathway for isoprenoid precursor biosynthesis. In Francisella tularensis subsp. novicida (strain U112), this protein is 4-hydroxy-3-methylbut-2-enyl diphosphate reductase.